The following is a 352-amino-acid chain: D-arabitol-phosphate dehydrogenase (352 aa).

Mn(2+) contacts are provided by cysteine 43, histidine 65, cysteine 96, cysteine 99, cysteine 102, cysteine 110, and glutamate 151.

This sequence belongs to the zinc-containing alcohol dehydrogenase family. Homotetramer. Mn(2+) serves as cofactor.

It catalyses the reaction D-arabinitol 1-phosphate + NAD(+) = D-xylulose 5-phosphate + NADH + H(+). Its activity is regulated as follows. Inhibited by EDTA, 4-hydroxymercuribenzoic acid (PHMB), mercury and zinc ions at a concentration of 2 mM. Functionally, involved in the arabitol catabolism via the arabitol phosphate route. Catalyzes only the transformation of D-arabitol 1-phosphate (Arb1P) and D-arabitol 5-phosphate (Arb5P) into D-xylulose 5-phosphate (Xlu5P) and ribulose 5-phosphate, respectively. It can use both NAD and NADP. This chain is D-arabitol-phosphate dehydrogenase, found in Enterococcus avium (Streptococcus avium).